Consider the following 40-residue polypeptide: uncharacterized protein (40 aa).

This is an uncharacterized protein from Leptolyngbya boryana (Plectonema boryanum).